The primary structure comprises 505 residues: Phosphomevalonate kinase, peroxisomal (505 aa).

Residue alanine 2 is modified to N-acetylalanine. Positions 57–65 match the Peroxisomal targeting signal PTS2 motif; sequence DVKLTSPQL. 177 to 187 lines the ATP pocket; the sequence is VAKTGLGSSAA.

This sequence belongs to the GHMP kinase family. Mevalonate kinase subfamily.

The protein resides in the peroxisome. It catalyses the reaction (R)-5-phosphomevalonate + ATP = (R)-5-diphosphomevalonate + ADP. Its pathway is isoprenoid biosynthesis; isopentenyl diphosphate biosynthesis via mevalonate pathway; isopentenyl diphosphate from (R)-mevalonate: step 2/3. This Arabidopsis thaliana (Mouse-ear cress) protein is Phosphomevalonate kinase, peroxisomal.